Reading from the N-terminus, the 238-residue chain is MEEGLQRCFVLHRRPYSESSLILDVFSEEYGRLSIISKGARSKRSNLKGVLQAFTPLLMKWSGKGSMRTLRQAETISLAIPLTGINLYSALYINELVVRVIEQETPYPALFLDYLTALTELAQTKNPEPALRRFELALLSSLGYGVDFLHCAGSGEMVSPEMTYRYREQKGFMASIRHDPLMSFKGDELIAISERRFITPEQLKAAKRFTRIALKPYLGGKPLKSRELFLPRTRSILK.

It belongs to the RecO family.

Involved in DNA repair and RecF pathway recombination. The chain is DNA repair protein RecO from Aliivibrio salmonicida (strain LFI1238) (Vibrio salmonicida (strain LFI1238)).